Reading from the N-terminus, the 315-residue chain is Replication factor C small subunit (315 aa).

43-50 (GSPGVGKT) is an ATP binding site.

The protein belongs to the activator 1 small subunits family. RfcS subfamily. In terms of assembly, heteromultimer composed of small subunits (RfcS) and large subunits (RfcL).

Functionally, part of the RFC clamp loader complex which loads the PCNA sliding clamp onto DNA. The polypeptide is Replication factor C small subunit (Methanococcus vannielii (strain ATCC 35089 / DSM 1224 / JCM 13029 / OCM 148 / SB)).